The primary structure comprises 467 residues: Pentatricopeptide repeat-containing protein At1g77170, mitochondrial (467 aa).

The transit peptide at 1-30 directs the protein to the mitochondrion; sequence MFFSGLISKLHVHGTKRTNHFTIFHRLNHF. 9 PPR repeats span residues 81-115, 116-150, 151-181, 182-216, 217-251, 254-284, 285-319, 320-350, and 356-386; these read IAFL…TVLP, DRYS…GFVG, DEFC…NPER, KLGS…GLEP, DDFT…KTEE, DIMM…MRQR, NVVS…GVRP, NKIT…MKSE, and GLSH…MPMK. The segment at 391–466 is type E motif; sequence VWGCLMGGCE…IPAYSYASTT (76 aa).

The protein belongs to the PPR family. PCMP-E subfamily.

The protein localises to the mitochondrion. In Arabidopsis thaliana (Mouse-ear cress), this protein is Pentatricopeptide repeat-containing protein At1g77170, mitochondrial (PCMP-E21).